The following is a 356-amino-acid chain: MRAVALFPDEPELRVIEKPKPTPENGEALIRTVAVGIDGSDRRIAAGEIGGDVPDGEDHLVIGHEAVGVVEEPNGTDLARGDVVAPLVRRPVGDGSRFAANGELDMAPPGSFHECGITGAHGYMSEFFTARPGYLVPIPESRAAYGFFVEPASLVEKALDQTEAARSGFDWRPSSAFVLGNGNLGLLALTRLETGDEFERTYCLGRRDRPDPTIDVIENVGGTYVDSRELSLDEFPAVHEPVDFAFETTGHPAHAVEAVDALAPNGVVTLQGIPGSSSTVEIDGGAFHTDLVVTNKAILGVVNARRSHFRAAAEWLAETPESVLDALVTGVYGPDEIDEAFADSAETIKTVVSFDR.

D38 is a Zn(2+) binding site. Residue S40 participates in substrate binding. Zn(2+)-binding residues include H64 and E65. E114 and E150 together coordinate substrate. Residue E150 coordinates Zn(2+). Residues 181–184, 206–207, and 301–303 each bind NADP(+); these read NGNL, RR, and VVN. A substrate-binding site is contributed by N303.

Belongs to the zinc-containing alcohol dehydrogenase family. Glucose 1-dehydrogenase subfamily. Requires Zn(2+) as cofactor.

It carries out the reaction D-glucose + NAD(+) = D-glucono-1,5-lactone + NADH + H(+). The enzyme catalyses D-glucose + NADP(+) = D-glucono-1,5-lactone + NADPH + H(+). Catalyzes the NAD(P)(+)-dependent oxidation of D-glucose to D-gluconate via gluconolactone. Can utilize both NAD(+) and NADP(+) as electron acceptor. Is involved in the degradation of glucose through a modified Entner-Doudoroff pathway. This is Glucose 1-dehydrogenase 2 from Haloterrigena turkmenica (strain ATCC 51198 / DSM 5511 / JCM 9101 / NCIMB 13204 / VKM B-1734 / 4k) (Halococcus turkmenicus).